The following is a 430-amino-acid chain: Dihydrolipoyllysine-residue acetyltransferase component of pyruvate dehydrogenase complex (430 aa).

The Lipoyl-binding domain maps to 2–77 (AFEFRLPDIG…VVGDVIVKID (76 aa)). Lys-43 carries the N6-lipoyllysine modification. A disordered region spans residues 80–122 (DAEDMQFKGHDDDSSSKEEPAKEEAPAEQAPVATQTEEVDENR). The span at 84–104 (MQFKGHDDDSSSKEEPAKEEA) shows a compositional bias: basic and acidic residues. One can recognise a Peripheral subunit-binding (PSBD) domain in the interval 125–162 (KAMPSVRKYAREKGVNIKAVSGSGKNGRITKEDVDAYL). Positions 164-199 (GGAPTASNESAASATSEEVAETPAAPAAVSLEGDFP) are disordered. Residues 166–193 (APTASNESAASATSEEVAETPAAPAAVS) show a composition bias toward low complexity. The active site involves His-401.

Belongs to the 2-oxoacid dehydrogenase family. In terms of assembly, forms a 24-polypeptide structural core with octahedral symmetry. (R)-lipoate is required as a cofactor.

It carries out the reaction N(6)-[(R)-dihydrolipoyl]-L-lysyl-[protein] + acetyl-CoA = N(6)-[(R)-S(8)-acetyldihydrolipoyl]-L-lysyl-[protein] + CoA. The pyruvate dehydrogenase complex catalyzes the overall conversion of pyruvate to acetyl-CoA and CO(2). It contains multiple copies of three enzymatic components: pyruvate dehydrogenase (E1), dihydrolipoamide acetyltransferase (E2) and lipoamide dehydrogenase (E3). The sequence is that of Dihydrolipoyllysine-residue acetyltransferase component of pyruvate dehydrogenase complex (pdhC) from Staphylococcus aureus (strain Mu50 / ATCC 700699).